A 226-amino-acid chain; its full sequence is Uracil-DNA glycosylase (226 aa).

The active-site Proton acceptor is the aspartate 64.

This sequence belongs to the uracil-DNA glycosylase (UDG) superfamily. UNG family.

It is found in the cytoplasm. It catalyses the reaction Hydrolyzes single-stranded DNA or mismatched double-stranded DNA and polynucleotides, releasing free uracil.. Functionally, excises uracil residues from the DNA which can arise as a result of misincorporation of dUMP residues by DNA polymerase or due to deamination of cytosine. In Proteus mirabilis (strain HI4320), this protein is Uracil-DNA glycosylase.